A 110-amino-acid polypeptide reads, in one-letter code: U1-lycotoxin-Ls1gg (110 aa).

The first 20 residues, 1–20 (MKFVLLFGVLLVTLFSYSSA), serve as a signal peptide directing secretion. Positions 21–44 (EMLDDFDQADEDELLSLIEKEEAR) are excised as a propeptide. Cystine bridges form between Cys-54-Cys-71, Cys-61-Cys-89, and Cys-73-Cys-87.

It belongs to the neurotoxin 19 (CSTX) family. 03 subfamily. In terms of tissue distribution, expressed by the venom gland.

Its subcellular location is the secreted. The protein is U1-lycotoxin-Ls1gg of Lycosa singoriensis (Wolf spider).